A 468-amino-acid chain; its full sequence is Argininosuccinate lyase (468 aa).

The protein belongs to the lyase 1 family. Argininosuccinate lyase subfamily.

It localises to the cytoplasm. The enzyme catalyses 2-(N(omega)-L-arginino)succinate = fumarate + L-arginine. It participates in amino-acid biosynthesis; L-arginine biosynthesis; L-arginine from L-ornithine and carbamoyl phosphate: step 3/3. In Methanothermobacter thermautotrophicus (strain ATCC 29096 / DSM 1053 / JCM 10044 / NBRC 100330 / Delta H) (Methanobacterium thermoautotrophicum), this protein is Argininosuccinate lyase.